We begin with the raw amino-acid sequence, 192 residues long: Thiosulfate reductase electron transfer subunit PhsB (192 aa).

4Fe-4S ferredoxin-type domains lie at Tyr8–Gly36, Thr55–Asn86, and Gly87–Gln116. Cys17, Cys20, Cys23, Cys27, Cys64, Cys67, Cys72, Cys76, Cys96, Cys99, Cys102, Cys106, Cys123, Cys126, Cys139, and Cys143 together coordinate [4Fe-4S] cluster.

Composed of three subunits: PhsA, PhsB and PhsC. It depends on [4Fe-4S] cluster as a cofactor.

The protein resides in the cell inner membrane. Its function is as follows. Component of the PhsABC thiosulfate reductase that catalyzes the reduction of thiosulfate to sulfite and hydrogen sulfide, with menaquinol as the sole electron donor. Proton motive force (PMF) is required to drive transmembrane electron transfer within the reductase. The PhsB subunit transfers electrons between PhsC and PhsA. The chain is Thiosulfate reductase electron transfer subunit PhsB (phsB) from Salmonella typhi.